The sequence spans 105 residues: Heat shock protein HspQ (105 aa).

The interval S75–N105 is disordered.

This sequence belongs to the HspQ family.

The protein resides in the cytoplasm. Functionally, involved in the degradation of certain denaturated proteins, including DnaA, during heat shock stress. This is Heat shock protein HspQ from Escherichia coli O127:H6 (strain E2348/69 / EPEC).